A 164-amino-acid chain; its full sequence is Protein eva-1 homolog B (164 aa).

A helical transmembrane segment spans residues 29–49; it reads GLYFVLGVCFGLLLTLCLLVI. The disordered stretch occupies residues 56–110; it reads RSRPRTPAPRRDPRSSTLEPEDEDDEEDEDTMTRLGPDDTLQGQELSTEPDGPLS. Acidic residues predominate over residues 74 to 85; the sequence is EPEDEDDEEDED. A phosphothreonine mark is found at threonine 86, threonine 149, and threonine 157.

This sequence belongs to the EVA1 family.

Its subcellular location is the membrane. In Mus musculus (Mouse), this protein is Protein eva-1 homolog B (Eva1b).